The sequence spans 621 residues: Phosphomethylpyrimidine synthase (621 aa).

Residues 1–23 show a composition bias toward low complexity; that stretch reads MTAPFLSSLSPTSPLASATAPFP. Residues 1–29 are disordered; sequence MTAPFLSSLSPTSPLASATAPFPGSRKVY. Substrate contacts are provided by residues N215, M244, Y273, H309, 329 to 331, 370 to 373, and E409; these read SRG and DGLR. H413 provides a ligand contact to Zn(2+). Y436 contributes to the substrate binding site. H477 lines the Zn(2+) pocket. Positions 557, 560, and 565 each coordinate [4Fe-4S] cluster.

Belongs to the ThiC family. As to quaternary structure, homodimer. [4Fe-4S] cluster is required as a cofactor.

The catalysed reaction is 5-amino-1-(5-phospho-beta-D-ribosyl)imidazole + S-adenosyl-L-methionine = 4-amino-2-methyl-5-(phosphooxymethyl)pyrimidine + CO + 5'-deoxyadenosine + formate + L-methionine + 3 H(+). It functions in the pathway cofactor biosynthesis; thiamine diphosphate biosynthesis. Its function is as follows. Catalyzes the synthesis of the hydroxymethylpyrimidine phosphate (HMP-P) moiety of thiamine from aminoimidazole ribotide (AIR) in a radical S-adenosyl-L-methionine (SAM)-dependent reaction. The protein is Phosphomethylpyrimidine synthase of Rhodospirillum rubrum (strain ATCC 11170 / ATH 1.1.1 / DSM 467 / LMG 4362 / NCIMB 8255 / S1).